Reading from the N-terminus, the 565-residue chain is Glucose-6-phosphate isomerase (565 aa).

The active-site Proton donor is glutamate 373. Residues histidine 404 and lysine 530 contribute to the active site.

Belongs to the GPI family.

It localises to the cytoplasm. The enzyme catalyses alpha-D-glucose 6-phosphate = beta-D-fructose 6-phosphate. The protein operates within carbohydrate biosynthesis; gluconeogenesis. It participates in carbohydrate degradation; glycolysis; D-glyceraldehyde 3-phosphate and glycerone phosphate from D-glucose: step 2/4. Catalyzes the reversible isomerization of glucose-6-phosphate to fructose-6-phosphate. This is Glucose-6-phosphate isomerase from Corynebacterium jeikeium (strain K411).